Consider the following 358-residue polypeptide: MFYNFLSPLASEWTFFNVFRYITFRSMAALMTALLISIILGPRFITWLRRLKCGQYIHEDVAAHACKAGTPTMGGLLMLFSLSVSLLLWADLTNIYIWQAFFVFAGFGAVGFWDDITKLRHHKNRGISGKAKMGGQLAVACVAMLLLFVNPDYSSKLTIPFFKEVTFDLGWFYLPFGVFVMVAASNAVNLTDGLDGLAIGPSIVACIVFSIFIYITGNARFAGYLLVPYMPGVGEVTIFCAALVGAGLGFLWFNAYPAQVFMGDVGSLSIGGVLGYLALLCKQELVLAVVGGLFVAETLSVIVQVGYFRWTGGKRFFRMAPLHHHFELKGVPESKIIIRFWITSILLGLMALSVLKLR.

The next 10 helical transmembrane spans lie at 28–48, 70–90, 92–112, 133–153, 165–185, 196–216, 233–253, 260–280, 285–305, and 335–355; these read AALM…ITWL, TPTM…LLWA, LTNI…AVGF, MGGQ…NPDY, VTFD…VAAS, GLAI…IYIT, VGEV…FLWF, VFMG…LALL, LVLA…IVQV, and KIII…LSVL.

Belongs to the glycosyltransferase 4 family. MraY subfamily. It depends on Mg(2+) as a cofactor.

The protein localises to the cell inner membrane. The catalysed reaction is UDP-N-acetyl-alpha-D-muramoyl-L-alanyl-gamma-D-glutamyl-meso-2,6-diaminopimeloyl-D-alanyl-D-alanine + di-trans,octa-cis-undecaprenyl phosphate = di-trans,octa-cis-undecaprenyl diphospho-N-acetyl-alpha-D-muramoyl-L-alanyl-D-glutamyl-meso-2,6-diaminopimeloyl-D-alanyl-D-alanine + UMP. The protein operates within cell wall biogenesis; peptidoglycan biosynthesis. Functionally, catalyzes the initial step of the lipid cycle reactions in the biosynthesis of the cell wall peptidoglycan: transfers peptidoglycan precursor phospho-MurNAc-pentapeptide from UDP-MurNAc-pentapeptide onto the lipid carrier undecaprenyl phosphate, yielding undecaprenyl-pyrophosphoryl-MurNAc-pentapeptide, known as lipid I. The sequence is that of Phospho-N-acetylmuramoyl-pentapeptide-transferase from Desulfovibrio desulfuricans (strain ATCC 27774 / DSM 6949 / MB).